Here is a 361-residue protein sequence, read N- to C-terminus: Phospho-N-acetylmuramoyl-pentapeptide-transferase (361 aa).

A run of 10 helical transmembrane segments spans residues 28-48, 74-94, 99-119, 133-153, 168-188, 203-223, 236-256, 263-283, 288-308, and 338-358; these read LAIIITLSLSFITGPILIKFL, TMGGIMIILSSCLSTLLLADL, IWITLFGFISFGIIGFMDDYA, SKLLLQGIISFIICVLLEYLD, LSLDLGYFYIVFAMFVIVGSS, VPIAFTAGSFALISYLVGNLI, TGELTVLCAGLVGSCLGFLWF, VFMGDTGSLSLGGVLGIISVI, IVLAIVGGLFVIETTSVILQV, and KVVIRFWIISVIFALIGLSSL.

This sequence belongs to the glycosyltransferase 4 family. MraY subfamily. Requires Mg(2+) as cofactor.

The protein resides in the cell membrane. It carries out the reaction UDP-N-acetyl-alpha-D-muramoyl-L-alanyl-gamma-D-glutamyl-meso-2,6-diaminopimeloyl-D-alanyl-D-alanine + di-trans,octa-cis-undecaprenyl phosphate = di-trans,octa-cis-undecaprenyl diphospho-N-acetyl-alpha-D-muramoyl-L-alanyl-D-glutamyl-meso-2,6-diaminopimeloyl-D-alanyl-D-alanine + UMP. The protein operates within cell wall biogenesis; peptidoglycan biosynthesis. Functionally, catalyzes the initial step of the lipid cycle reactions in the biosynthesis of the cell wall peptidoglycan: transfers peptidoglycan precursor phospho-MurNAc-pentapeptide from UDP-MurNAc-pentapeptide onto the lipid carrier undecaprenyl phosphate, yielding undecaprenyl-pyrophosphoryl-MurNAc-pentapeptide, known as lipid I. The polypeptide is Phospho-N-acetylmuramoyl-pentapeptide-transferase (Rickettsia montanensis).